A 231-amino-acid polypeptide reads, in one-letter code: Pathogenesis-related thaumatin-like protein 3.7 (231 aa).

Residues methionine 1–alanine 27 form the signal peptide. Cystine bridges form between cysteine 36/cysteine 230, cysteine 77/cysteine 87, cysteine 92/cysteine 98, cysteine 143/cysteine 218, cysteine 148/cysteine 201, cysteine 156/cysteine 166, cysteine 170/cysteine 179, and cysteine 180/cysteine 188.

Belongs to the thaumatin family.

Its function is as follows. May be involved in disease resistance. This Cryptomeria japonica (Japanese cedar) protein is Pathogenesis-related thaumatin-like protein 3.7.